A 524-amino-acid chain; its full sequence is Lysophospholipid acyltransferase LPCAT4 (524 aa).

A run of 2 helical transmembrane segments spans residues 40–62 (CLLG…FLLW) and 87–107 (TVCH…LGFL). The HXXXXD motif motif lies at 129–134 (HSTFFD). A glycan (N-linked (GlcNAc...) asparagine) is linked at Asn-152. The interval 489 to 524 (PPHTSRGTSQTPNASSPGNPTALANGTVQAPKQKGD) is disordered. The span at 493 to 518 (SRGTSQTPNASSPGNPTALANGTVQA) shows a compositional bias: polar residues.

This sequence belongs to the 1-acyl-sn-glycerol-3-phosphate acyltransferase family. Widely expressed with predominant level in brain.

It is found in the endoplasmic reticulum membrane. It carries out the reaction a 1-acyl-sn-glycero-3-phosphoethanolamine + an acyl-CoA = a 1,2-diacyl-sn-glycero-3-phosphoethanolamine + CoA. The catalysed reaction is a 1-O-(1Z-alkenyl)-sn-glycero-3-phosphoethanolamine + an acyl-CoA = a 1-O-(1Z-alkenyl)-2-acyl-sn-glycero-3-phosphoethanolamine + CoA. It catalyses the reaction a 1-acyl-sn-glycero-3-phosphocholine + an acyl-CoA = a 1,2-diacyl-sn-glycero-3-phosphocholine + CoA. The enzyme catalyses a 1-O-alkyl-sn-glycero-3-phosphocholine + acetyl-CoA = a 1-O-alkyl-2-acetyl-sn-glycero-3-phosphocholine + CoA. It carries out the reaction a 1-acyl-sn-glycero-3-phospho-L-serine + an acyl-CoA = a 1,2-diacyl-sn-glycero-3-phospho-L-serine + CoA. The catalysed reaction is octanoyl-CoA + a 1-acyl-sn-glycero-3-phosphoethanolamine = 1-acyl-2-octanoyl-sn-glycero-3-phosphoethanolamine + CoA. It catalyses the reaction a 1-acyl-sn-glycero-3-phosphoethanolamine + hexadecanoyl-CoA = 1-acyl-2-hexadecanoyl-sn-glycero-3-phosphoethanolamine + CoA. The enzyme catalyses a 1-acyl-sn-glycero-3-phosphoethanolamine + octadecanoyl-CoA = 1-acyl-2-octadecanoyl-sn-glycero-3-phosphoethanolamine + CoA. It carries out the reaction a 1-acyl-sn-glycero-3-phosphoethanolamine + (9Z)-octadecenoyl-CoA = 1-acyl-2-(9Z)-octadecenoyl-sn-glycero-3-phosphoethanolamine + CoA. The catalysed reaction is a 1-acyl-sn-glycero-3-phosphoethanolamine + (5Z,8Z,11Z,14Z)-eicosatetraenoyl-CoA = 1-acyl-2-(5Z,8Z,11Z,14Z)-eicosatetraenoyl-sn-glycero-3-phosphoethanolamine + CoA. It catalyses the reaction a 1-O-(1Z-alkenyl)-sn-glycero-3-phosphoethanolamine + octanoyl-CoA = 1-O-(1Z)-alkenyl-2-octanoyl-sn-glycero-3-phosphoethanolamine + CoA. The enzyme catalyses a 1-O-(1Z-alkenyl)-sn-glycero-3-phosphoethanolamine + hexadecanoyl-CoA = 1-O-(1Z)-alkenyl-2-hexadecanoyl-sn-glycero-3-phosphoethanolamine + CoA. It carries out the reaction a 1-O-(1Z-alkenyl)-sn-glycero-3-phosphoethanolamine + octadecanoyl-CoA = 1-O-(1Z)-alkenyl-2-octadecanoyl-sn-glycero-3-phosphoethanolamine + CoA. The catalysed reaction is a 1-O-(1Z-alkenyl)-sn-glycero-3-phosphoethanolamine + (9Z)-octadecenoyl-CoA = 1-O-(1Z)-alkenyl-2-(9Z)-octadecenoyl-sn-glycero-3-phosphoethanolamine + CoA. It catalyses the reaction a 1-O-(1Z-alkenyl)-sn-glycero-3-phosphoethanolamine + (5Z,8Z,11Z,14Z)-eicosatetraenoyl-CoA = 1-O-(1Z)-alkenyl-2-(5Z,8Z,11Z,14Z)-eicosatetraenoyl-sn-glycero-3-phosphoethanolamine + CoA. The enzyme catalyses a 1-acyl-sn-glycero-3-phosphocholine + hexadecanoyl-CoA = 1-acyl-2-hexadecanoyl-sn-glycero-3-phosphocholine + CoA. It carries out the reaction a 1-acyl-sn-glycero-3-phosphocholine + (9Z)-octadecenoyl-CoA = a 1-acyl-2-(9Z)-octadecenoyl-sn-glycero-3-phosphocholine + CoA. The catalysed reaction is 1-O-hexadecyl-sn-glycero-3-phosphocholine + (9Z)-octadecenoyl-CoA = 1-O-hexadecyl-2-(9Z)-octadecenoyl-sn-glycero-3-phosphocholine + CoA. It catalyses the reaction 1-O-hexadecyl-sn-glycero-3-phosphocholine + (5Z,8Z,11Z,14Z)-eicosatetraenoyl-CoA = 1-O-hexadecyl-2-(5Z,8Z,11Z,14Z)-eicosatetraenoyl-sn-glycero-3-phosphocholine + CoA. The enzyme catalyses 1-hexadecanoyl-sn-glycero-3-phospho-L-serine + (9Z)-octadecenoyl-CoA = 1-hexadecanoyl-2-(9Z-octadecenoyl)-sn-glycero-3-phospho-L-serine + CoA. It carries out the reaction 1-octadecanoyl-sn-glycero-3-phospho-(1'-sn-glycerol) + (9Z)-octadecenoyl-CoA = 1-octadecanoyl-2-(9Z-octadecenoyl)-sn-glycero-3-phospho-(1'-sn-glycerol) + CoA. The catalysed reaction is 1-octadecanoyl-sn-glycero-3-phospho-(1'-sn-glycerol) + (5Z,8Z,11Z,14Z)-eicosatetraenoyl-CoA = 1-octadecanoyl-2-(5Z,8Z,11Z,14Z-eicosatetraenoyl)-sn-glycero-3-phospho-(1'-sn-glycerol) + CoA. The protein operates within lipid metabolism; phospholipid metabolism. Its function is as follows. Displays acyl-CoA-dependent lysophospholipid acyltransferase activity with a subset of lysophospholipids as substrates; converts lysophosphatidylethanolamine to phosphatidylethanolamine, lysophosphatidylcholine to phosphatidycholine, 1-alkenyl-lysophatidylethanolamine to 1-alkenyl-phosphatidylethanolamine, lysophosphatidylglycerol and alkyl-lysophosphatidylcholine to phosphatidylglycerol and alkyl-phosphatidylcholine, respectively. In contrast, has no lysophosphatidylinositol, glycerol-3-phosphate, diacylglycerol or lysophosphatidic acid acyltransferase activity. Prefers long chain acyl-CoAs (C16, C18) as acyl donors. In Homo sapiens (Human), this protein is Lysophospholipid acyltransferase LPCAT4 (LPCAT4).